We begin with the raw amino-acid sequence, 349 residues long: Phosphate acetyltransferase (349 aa).

It belongs to the phosphate acetyltransferase and butyryltransferase family.

It is found in the cytoplasm. It carries out the reaction acetyl-CoA + phosphate = acetyl phosphate + CoA. Its pathway is metabolic intermediate biosynthesis; acetyl-CoA biosynthesis; acetyl-CoA from acetate: step 2/2. The protein is Phosphate acetyltransferase (pta) of Rickettsia typhi (strain ATCC VR-144 / Wilmington).